We begin with the raw amino-acid sequence, 236 residues long: Orotidine 5'-phosphate decarboxylase (236 aa).

Substrate contacts are provided by residues aspartate 16, lysine 38, 65-74 (DLKYHDIPNT), threonine 124, arginine 185, glutamine 194, glycine 214, and arginine 215. Lysine 67 functions as the Proton donor in the catalytic mechanism.

This sequence belongs to the OMP decarboxylase family. Type 1 subfamily. Homodimer.

It carries out the reaction orotidine 5'-phosphate + H(+) = UMP + CO2. The protein operates within pyrimidine metabolism; UMP biosynthesis via de novo pathway; UMP from orotate: step 2/2. Catalyzes the decarboxylation of orotidine 5'-monophosphate (OMP) to uridine 5'-monophosphate (UMP). The sequence is that of Orotidine 5'-phosphate decarboxylase from Hydrogenovibrio crunogenus (strain DSM 25203 / XCL-2) (Thiomicrospira crunogena).